Here is a 258-residue protein sequence, read N- to C-terminus: Type III pantothenate kinase (258 aa).

9-16 (DIGNTSVN) serves as a coordination point for ATP. Residue 110 to 113 (GADR) coordinates substrate. Asp112 functions as the Proton acceptor in the catalytic mechanism. A K(+)-binding site is contributed by Asp132. An ATP-binding site is contributed by Thr135. Thr187 provides a ligand contact to substrate.

Belongs to the type III pantothenate kinase family. Homodimer. Requires NH4(+) as cofactor. The cofactor is K(+).

The protein localises to the cytoplasm. The enzyme catalyses (R)-pantothenate + ATP = (R)-4'-phosphopantothenate + ADP + H(+). The protein operates within cofactor biosynthesis; coenzyme A biosynthesis; CoA from (R)-pantothenate: step 1/5. In terms of biological role, catalyzes the phosphorylation of pantothenate (Pan), the first step in CoA biosynthesis. This chain is Type III pantothenate kinase, found in Dehalococcoides mccartyi (strain ATCC BAA-2266 / KCTC 15142 / 195) (Dehalococcoides ethenogenes (strain 195)).